Reading from the N-terminus, the 390-residue chain is MWITQLLGIRSGPPLGSHAWILIAIFQLAMDFIICESESPGKAYKHLQRPSLVRRVHKVALWSPTELLKLRNQKQFWNPINNEHPVLPIERKHYKTYHENLFFSRNVPLKYSTMKNSHYSSQQIKHTVKTTNLNRSKRQLQSRSWDNLKRFLDSGSQPTTVSEFILWGPTGDDDVESSTFPGIYETTRTSTVHARTTLLETTTTTTASTTTNVKVTTLQNPGIHNGKKSPGRISTTDPNPGNGKTARPPRIPNDTSGLAVHQIITITVSLIMVIAALITTLVLKNCCAQSGNARRNSHQRKINQQEESCQNLTDFTPASVPSNMDIFTAYNETLHCSHECIRTPVPVYTDEALHQTGAFKTTFNGNRPTSSDRHLIPVAFVSEKWFEISC.

A signal peptide spans 1-37 (MWITQLLGIRSGPPLGSHAWILIAIFQLAMDFIICES). Residues 38–262 (ESPGKAYKHL…NDTSGLAVHQ (225 aa)) are Extracellular-facing. Residues 218–253 (LQNPGIHNGKKSPGRISTTDPNPGNGKTARPPRIPN) are disordered. A helical membrane pass occupies residues 263–283 (IITITVSLIMVIAALITTLVL). A targeting signals region spans residues 283–390 (LKNCCAQSGN…VSEKWFEISC (108 aa)). The Cytoplasmic segment spans residues 284 to 390 (KNCCAQSGNA…VSEKWFEISC (107 aa)).

The protein resides in the basolateral cell membrane. It localises to the apical cell membrane. It is found in the cell junction. The protein localises to the adherens junction. May play a role in cell adhesion and cell migration. In Xenopus tropicalis (Western clawed frog), this protein is Adherens junction-associated protein 1 (ajap1).